The chain runs to 231 residues: Glutathione-specific gamma-glutamylcyclotransferase (231 aa).

49 to 54 is a substrate binding site; sequence IFGYGS. The active-site Proton acceptor is the E127.

It belongs to the gamma-glutamylcyclotransferase family. ChaC subfamily.

It carries out the reaction glutathione = L-cysteinylglycine + 5-oxo-L-proline. Catalyzes the cleavage of glutathione into 5-oxo-L-proline and a Cys-Gly dipeptide. Acts specifically on glutathione, but not on other gamma-glutamyl peptides. The chain is Glutathione-specific gamma-glutamylcyclotransferase from Escherichia coli (strain K12).